A 156-amino-acid chain; its full sequence is MNLNATIFFQMLVFFVLGWFTMKFVWPPLTKAMDERRQKIADGLAAAEKGKADLAQAQARVSLIEASAKSENHARIIEAEKQAASLIEQARREAEAERARIVAQAAQDAAQEVQRARDALRDDVAALAVKGAEQILKREVDARAHAELLNQLKAQL.

Residues 7–27 (IFFQMLVFFVLGWFTMKFVWP) traverse the membrane as a helical segment.

It belongs to the ATPase B chain family. In terms of assembly, F-type ATPases have 2 components, F(1) - the catalytic core - and F(0) - the membrane proton channel. F(1) has five subunits: alpha(3), beta(3), gamma(1), delta(1), epsilon(1). F(0) has three main subunits: a(1), b(2) and c(10-14). The alpha and beta chains form an alternating ring which encloses part of the gamma chain. F(1) is attached to F(0) by a central stalk formed by the gamma and epsilon chains, while a peripheral stalk is formed by the delta and b chains.

The protein localises to the cell inner membrane. F(1)F(0) ATP synthase produces ATP from ADP in the presence of a proton or sodium gradient. F-type ATPases consist of two structural domains, F(1) containing the extramembraneous catalytic core and F(0) containing the membrane proton channel, linked together by a central stalk and a peripheral stalk. During catalysis, ATP synthesis in the catalytic domain of F(1) is coupled via a rotary mechanism of the central stalk subunits to proton translocation. Its function is as follows. Component of the F(0) channel, it forms part of the peripheral stalk, linking F(1) to F(0). The sequence is that of ATP synthase subunit b from Bordetella petrii (strain ATCC BAA-461 / DSM 12804 / CCUG 43448).